The chain runs to 589 residues: Zinc finger and BTB domain-containing protein 46 (589 aa).

In terms of domain architecture, BTB spans 31–99 (CDVCVVVEGK…MYSAHLALTS (69 aa)). Positions 173-330 (RRTSPANSSG…ASSSDSRGER (158 aa)) are disordered. The span at 197–207 (GKEDQEPKADG) shows a compositional bias: basic and acidic residues. Lysine 229 participates in a covalent cross-link: Glycyl lysine isopeptide (Lys-Gly) (interchain with G-Cter in SUMO2). Phosphoserine is present on serine 234. Positions 305–325 (WPFSSRDSNADLSVTEASSSD) are enriched in polar residues. 2 C2H2-type zinc fingers span residues 418 to 436 (FKCP…LKRH) and 446 to 468 (YPCE…TLVH). The tract at residues 512 to 589 (PLDHGGGGGE…GPDKDFAWLS (78 aa)) is disordered. Acidic residues predominate over residues 546–570 (EELGEDDEGLAPEDALLADDKDEED).

In terms of processing, sumoylated. Desumoylation by DESI1 reverses transcriptional repression activity.

The protein localises to the nucleus. Its function is as follows. Functions as a transcriptional repressor for PRDM1. The sequence is that of Zinc finger and BTB domain-containing protein 46 (ZBTB46) from Homo sapiens (Human).